Reading from the N-terminus, the 436-residue chain is Transcription factor Sox-10 (436 aa).

5 disordered regions span residues 1-55 (MSDD…ERFP), 145-183 (RLRM…AEGG), 195-257 (HLDH…DFGN), 322-346 (PQTD…QPST), and 413-436 (SPSV…LSRP). A Glycyl lysine isopeptide (Lys-Gly) (interchain with G-Cter in SUMO) cross-link involves residue Lys44. Residues 48-88 (DSEDERFPVCIREAVSQVLSGYDWTLVPMPVRVNGGSKSKP) are dimerization (DIM). The segment at residues 90–158 (VKRPMNAFMV…QHKKDHPDYK (69 aa)) is a DNA-binding region (HMG box). The span at 145 to 159 (RLRMQHKKDHPDYKY) shows a compositional bias: basic and acidic residues. Composition is skewed to polar residues over residues 205–215 (SDGNSEHSAGQ) and 331–346 (KTES…QPST). The tract at residues 209 to 295 (SEHSAGQSHG…NGHAGHPSHI (87 aa)) is transactivation domain (TAM). The segment at 327–436 (KAQVKTESSS…QPVYTTLSRP (110 aa)) is transactivation domain (TAC). Residue Lys331 forms a Glycyl lysine isopeptide (Lys-Gly) (interchain with G-Cter in SUMO) linkage.

As to quaternary structure, interacts with the sumoylation factors ube2i/ubc9 and sumo1. Sumoylated.

It localises to the cytoplasm. The protein localises to the nucleus. Functionally, acts early in neural crest formation, functioning redundantly with the other group E Sox factors sox8 and sox9 to induce neural crest progenitors. Acts downstream of wnt-signaling at the neural plate border. Involved in the specification of neural crest progenitors fated to form the pigment cell lineage. This chain is Transcription factor Sox-10, found in Xenopus tropicalis (Western clawed frog).